The primary structure comprises 190 residues: NADH-ubiquinone oxidoreductase 75 kDa subunit, mitochondrial (190 aa).

The protein belongs to the complex I 75 kDa subunit family. Core subunit of respiratory chain NADH dehydrogenase (Complex I) which is composed of 45 different subunits. This is the largest subunit of complex I and it is a component of the iron-sulfur (IP) fragment of the enzyme. Complex I associates with ubiquinol-cytochrome reductase complex (Complex III) to form supercomplexes. Interacts with MDM2 and AKAP1. [2Fe-2S] cluster serves as cofactor. The cofactor is [4Fe-4S] cluster.

It localises to the mitochondrion inner membrane. It carries out the reaction a ubiquinone + NADH + 5 H(+)(in) = a ubiquinol + NAD(+) + 4 H(+)(out). Its function is as follows. Core subunit of the mitochondrial membrane respiratory chain NADH dehydrogenase (Complex I) which catalyzes electron transfer from NADH through the respiratory chain, using ubiquinone as an electron acceptor. Essential for catalysing the entry and efficient transfer of electrons within complex I. Plays a key role in the assembly and stability of complex I and participates in the association of complex I with ubiquinol-cytochrome reductase complex (Complex III) to form supercomplexes. The protein is NADH-ubiquinone oxidoreductase 75 kDa subunit, mitochondrial of Mesocricetus auratus (Golden hamster).